The following is a 104-amino-acid chain: Large ribosomal subunit protein uL24 (104 aa).

The protein belongs to the universal ribosomal protein uL24 family. In terms of assembly, part of the 50S ribosomal subunit.

One of two assembly initiator proteins, it binds directly to the 5'-end of the 23S rRNA, where it nucleates assembly of the 50S subunit. Functionally, one of the proteins that surrounds the polypeptide exit tunnel on the outside of the subunit. The protein is Large ribosomal subunit protein uL24 of Shewanella piezotolerans (strain WP3 / JCM 13877).